The primary structure comprises 125 residues: Type II secretion system protein I (125 aa).

The propeptide at 1–5 is leader sequence; the sequence is MKQQG. The residue at position 6 (methionine 6) is an N-methylmethionine. Residues 6 to 26 traverse the membrane as a helical segment; that stretch reads MTLLEVMVALVIFALAGLTVL.

This sequence belongs to the GSP I family. As to quaternary structure, type II secretion is composed of four main components: the outer membrane complex, the inner membrane complex, the cytoplasmic secretion ATPase and the periplasm-spanning pseudopilus. Interacts with core component OutG. Post-translationally, cleaved by prepilin peptidase. In terms of processing, methylated by prepilin peptidase at the amino group of the N-terminal methionine once the leader sequence is cleaved by prepilin peptidase.

The protein localises to the cell inner membrane. Component of the type II secretion system required for the energy-dependent secretion of extracellular factors such as proteases and toxins from the periplasm. Part of the pseudopilus tip complex that is critical for the recognition and binding of secretion substrates. This Dickeya chrysanthemi (Pectobacterium chrysanthemi) protein is Type II secretion system protein I (outI).